The sequence spans 263 residues: Aquaglyceroporin (263 aa).

Residues 1-22 (MDQFVFSGGSEGGGELGGDRER) form a disordered region. Transmembrane regions (helical) follow at residues 41–61 (KYFCEFFAALVIVSAVAFGLA), 64–84 (GGAQAAPLSITSTIFALITLF), 113–133 (LCYVAAQLIGGTVGAFIGYGI), 157–177 (VIPTMVMIYAVLVLVFGYGVM), 180–200 (LTVPFVVGACVLAGAFAGATM), and 222–242 (VAALLVTLFGPFLGAMFAFLG).

It belongs to the MIP/aquaporin (TC 1.A.8) family. In terms of assembly, multimer.

It localises to the vacuole membrane. It catalyses the reaction H2O(in) = H2O(out). The catalysed reaction is glycerol(in) = glycerol(out). The enzyme catalyses urea(in) = urea(out). Mediates water and glycerol transport across cell membranes. Permeable to selected sugar alcohols of up to five carbons and urea. Permeable to methylamine/methylammonium. The chain is Aquaglyceroporin from Toxoplasma gondii (strain ATCC 50611 / Me49).